Consider the following 1253-residue polypeptide: Methionine synthase (1253 aa).

The Hcy-binding domain occupies 6-326; that stretch reads QDEIEAILRK…DHIREIAEAV (321 aa). Positions 248, 311, and 312 each coordinate Zn(2+). In terms of domain architecture, Pterin-binding spans 359–620; that stretch reads FVNIGERCNV…IHKDLLQLCE (262 aa). (6S)-5,6,7,8-tetrahydrofolate-binding positions include 370-372, aspartate 437, asparagine 458, aspartate 525, asparagine 567, arginine 573, and arginine 579; that span reads GSK. Residues 650-747 enclose the B12-binding N-terminal domain; that stretch reads QTDEWRNGSI…FMEKEREEAR (98 aa). Residues glutamate 697, 770 to 774, histidine 773, serine 818, threonine 822, and alanine 874 contribute to the methylcob(III)alamin site; that span reads GDVHD. Positions 760 to 895 constitute a B12-binding domain; the sequence is QGTIVLATVK…DENLKDDYFE (136 aa). The AdoMet activation domain occupies 911-1253; that stretch reads SLKERKYLPL…LGPILGYDTD (343 aa). S-adenosyl-L-methionine contacts are provided by residues aspartate 962, arginine 1160, and 1215-1216; that span reads YF. Threonine 1252 is modified (phosphothreonine).

This sequence belongs to the vitamin-B12 dependent methionine synthase family. In terms of assembly, monomer. Dimer. Forms a multiprotein complex with MMACHC, MMADHC and MTRR. The cofactor is methylcob(III)alamin. Requires Zn(2+) as cofactor.

The protein localises to the cytoplasm. The enzyme catalyses (6S)-5-methyl-5,6,7,8-tetrahydrofolate + L-homocysteine = (6S)-5,6,7,8-tetrahydrofolate + L-methionine. The protein operates within amino-acid biosynthesis; L-methionine biosynthesis via de novo pathway; L-methionine from L-homocysteine (MetH route): step 1/1. In terms of biological role, catalyzes the transfer of a methyl group from methylcob(III)alamin (MeCbl) to homocysteine, yielding enzyme-bound cob(I)alamin and methionine in the cytosol. MeCbl is an active form of cobalamin (vitamin B12) used as a cofactor for methionine biosynthesis. Cob(I)alamin form is regenerated to MeCbl by a transfer of a methyl group from 5-methyltetrahydrofolate. The processing of cobalamin in the cytosol occurs in a multiprotein complex composed of at least MMACHC, MMADHC, MTRR (methionine synthase reductase) and MTR which may contribute to shuttle safely and efficiently cobalamin towards MTR in order to produce methionine. The protein is Methionine synthase (Mtr) of Rattus norvegicus (Rat).